The following is a 291-amino-acid chain: MAEITASMVKELRERTDAPMMDCKKALTEAEGDMARAEEILRVRFGNKASKAAGRVAAEGVVAVSIKADGKLGAIVEINSETDFCAKNADFLAFVAQVAEAAATEKPADVAALSALKIDGGSVEDIRTQLIGKIGENITVRRFAVTEAKGKLVSYVHGGKIGVLVDLVGGDETLGKDIAMHIAAAKPKSLDASGIPAELIEAERRVAIEKAKEAGKPEAMLDKIADGTVQKFLKEVTLLSQPFVKDDKQTIEQLLKANNASIASFTMYVVGEGIEKVVTDFAAEVAAAAKV.

An involved in Mg(2+) ion dislocation from EF-Tu region spans residues 82-85; sequence TDFC.

This sequence belongs to the EF-Ts family.

It localises to the cytoplasm. Functionally, associates with the EF-Tu.GDP complex and induces the exchange of GDP to GTP. It remains bound to the aminoacyl-tRNA.EF-Tu.GTP complex up to the GTP hydrolysis stage on the ribosome. The sequence is that of Elongation factor Ts from Methylobacillus flagellatus (strain ATCC 51484 / DSM 6875 / VKM B-1610 / KT).